The sequence spans 356 residues: ATP-dependent 6-phosphofructokinase (356 aa).

ATP contacts are provided by residues glycine 15, 78–79 (KG), and 115–118 (GEGT). Glutamate 116 serves as a coordination point for Mg(2+). Substrate-binding positions include 138–140 (TID), arginine 175, 182–184 (MGR), glutamate 235, arginine 272, and 278–281 (HLQR). The active-site Proton acceptor is the aspartate 140.

It belongs to the phosphofructokinase type A (PFKA) family. Mixed-substrate PFK group III subfamily. As to quaternary structure, homodimer or homotetramer. The cofactor is Mg(2+).

It is found in the cytoplasm. It catalyses the reaction beta-D-fructose 6-phosphate + ATP = beta-D-fructose 1,6-bisphosphate + ADP + H(+). Its pathway is carbohydrate degradation; glycolysis; D-glyceraldehyde 3-phosphate and glycerone phosphate from D-glucose: step 3/4. Functionally, catalyzes the phosphorylation of D-fructose 6-phosphate to fructose 1,6-bisphosphate by ATP, the first committing step of glycolysis. This is ATP-dependent 6-phosphofructokinase from Chloroflexus aggregans (strain MD-66 / DSM 9485).